Reading from the N-terminus, the 668-residue chain is UvrABC system protein B (668 aa).

The 152-residue stretch at 25–176 (THLQSGHSRQ…DQRQLLRNLA (152 aa)) folds into the Helicase ATP-binding domain. 38 to 45 (GATGTGKT) contributes to the ATP binding site. The Beta-hairpin motif lies at 91–114 (YYDYYQPEAYIPVTDTFIEKTASI). Residues 429 to 591 (QVDDLLAEIQ…ITPQPVKKGS (163 aa)) enclose the Helicase C-terminal domain. Residues 626-661 (PELITQLEAQMKEAAKNLEFEEAAKYRDRIKNLRSK) enclose the UVR domain.

Belongs to the UvrB family. Forms a heterotetramer with UvrA during the search for lesions. Interacts with UvrC in an incision complex.

Its subcellular location is the cytoplasm. Functionally, the UvrABC repair system catalyzes the recognition and processing of DNA lesions. A damage recognition complex composed of 2 UvrA and 2 UvrB subunits scans DNA for abnormalities. Upon binding of the UvrA(2)B(2) complex to a putative damaged site, the DNA wraps around one UvrB monomer. DNA wrap is dependent on ATP binding by UvrB and probably causes local melting of the DNA helix, facilitating insertion of UvrB beta-hairpin between the DNA strands. Then UvrB probes one DNA strand for the presence of a lesion. If a lesion is found the UvrA subunits dissociate and the UvrB-DNA preincision complex is formed. This complex is subsequently bound by UvrC and the second UvrB is released. If no lesion is found, the DNA wraps around the other UvrB subunit that will check the other stand for damage. This chain is UvrABC system protein B, found in Acaryochloris marina (strain MBIC 11017).